Consider the following 2365-residue polypeptide: Voltage-dependent T-type calcium channel subunit alpha-1H (2365 aa).

A disordered region spans residues 1 to 63 (MTEGTLAADE…PGTECGADLG (63 aa)). The Cytoplasmic portion of the chain corresponds to 1-100 (MTEGTLAADE…SWCLRLVSRR (100 aa)). The span at 16-36 (GASPSAPAAPVRASPASPGVP) shows a compositional bias: low complexity. The I repeat unit spans residues 87–422 (TRPRSWCLRL…LCLVVIATQF (336 aa)). A helical membrane pass occupies residues 101-119 (WFEHISMLVIMLNCVTLGM). Over 120-141 (FRPCEDVECRSERCSILEAFDD) the chain is Extracellular. Residue aspartate 140 participates in Zn(2+) binding. Residues 142–160 (FIFAFFAVEMVIKMVALGL) form a helical membrane-spanning segment. At 161–169 (FGQKCYLGD) the chain is on the cytoplasmic side. The helical transmembrane segment at 170-184 (TWNRLDFFIVMAGMM) threads the bilayer. The Extracellular portion of the chain corresponds to 185–193 (EYSLDGHNV). Residues aspartate 189 and histidine 191 each contribute to the Zn(2+) site. The N-linked (GlcNAc...) asparagine glycan is linked to asparagine 192. A helical transmembrane segment spans residues 194–212 (SLSAIRTVRVLRPLRAINR). Over 213–232 (VPSMRILVTLLLDTLPMLGN) the chain is Cytoplasmic. Residues 233–253 (VLLLCFFVFFIFGIVGVQLWA) traverse the membrane as a helical segment. The Extracellular segment spans residues 254–394 (GLLRNRCFLD…YYVMDAHSFY (141 aa)). A glycan (N-linked (GlcNAc...) asparagine) is linked at asparagine 271. The chain crosses the membrane as a helical span at residues 395–419 (NFIYFILLIIVGSFFMINLCLVVIA). The Cytoplasmic segment spans residues 420–790 (TQFSETKQRE…SKLRRIVDSK (371 aa)). Disordered stretches follow at residues 490 to 573 (VDPS…SESV), 618 to 656 (PSGA…SPSP), and 737 to 761 (GDCR…RWRP). Over residues 500-532 (GPRRRPRRAGRRTASVHHLVYHHHHHHHHHYHF) the composition is skewed to basic residues. Positions 557-566 (PPSPPSPGHG) are enriched in pro residues. The segment covering 621-631 (AVNSKGSTSSR) has biased composition (polar residues). The stretch at 776 to 1015 (WASFSSKLRR…LLVAILVEGF (240 aa)) is one II repeat. The helical transmembrane segment at 791–811 (YFNRGIMAAILVNTLSMGVEY) threads the bilayer. Residues 812 to 824 (HEQPDELTNALEI) lie on the Extracellular side of the membrane. Residues 825-846 (SNIVFTSMFALEMLLKLLACGP) traverse the membrane as a helical segment. The Cytoplasmic segment spans residues 847–852 (LGYIRN). Residues 853–871 (PYNIFDGIVVIISVWEIVG) traverse the membrane as a helical segment. Residues 872–879 (QADGGLSV) are Extracellular-facing. The helical transmembrane segment at 880 to 903 (LRTFRLLRVLKLVRFLPALRRQLV) threads the bilayer. At 904-914 (VLMRTMDNVAT) the chain is on the cytoplasmic side. A helical membrane pass occupies residues 915–935 (FCMLLMLFIFIFSILGMHLFG). The Extracellular segment spans residues 936–987 (CKFSLKTDSGDTVPDRKNFDSLLWAIVTVFQILTQEDWNVVLYNGMASTSSW). A helical membrane pass occupies residues 988 to 1012 (AALYFVALMTFGNYVLFNLLVAILV). The Cytoplasmic portion of the chain corresponds to 1013 to 1301 (EGFQAEGDAT…NRLRVSCQKV (289 aa)). The tract at residues 1059–1215 (PNGHLEGRGS…HRSTMDLCPP (157 aa)) is disordered. A compositionally biased stretch (low complexity) spans 1130 to 1147 (GPNSAGSSRRSSWNSLGR). Positions 1199-1209 (RRAESLGHRST) are enriched in basic and acidic residues. The III repeat unit spans residues 1292-1569 (NRLRVSCQKV…MFVGVVVENF (278 aa)). A helical transmembrane segment spans residues 1302–1324 (IAHKMFDHVVLVFIFLNCITIAL). At 1325-1342 (ERPDIDPGSTERAFLSVS) the chain is on the extracellular side. Residues 1343–1363 (NYIFTAIFVVEMMVKVVALGL) form a helical membrane-spanning segment. At 1364–1373 (LWGEHAYLQS) the chain is on the cytoplasmic side. Residues 1374–1393 (SWNVLDGLLVLVSLVDIIVA) traverse the membrane as a helical segment. Residues 1394 to 1407 (VASAGGAKILGVLR) are Extracellular-facing. A helical transmembrane segment spans residues 1408–1429 (VLRLLRTLRPLRVISRAPGLKL). Residues 1430-1439 (VVETLISSLR) lie on the Cytoplasmic side of the membrane. A helical membrane pass occupies residues 1440 to 1463 (PIGNIVLICCAFFIIFGILGVQLF). Residues 1464–1540 (KGKFYYCEGT…DQQPVQNHNP (77 aa)) are Extracellular-facing. Asparagine 1477 is a glycosylation site (N-linked (GlcNAc...) asparagine). Residues 1541-1566 (WMLLYFISFLLIVSFFVLNMFVGVVV) traverse the membrane as a helical segment. Residues 1567-1627 (ENFHKCRQHQ…RRSIHSLCTS (61 aa)) lie on the Cytoplasmic side of the membrane. Residues 1613-1874 (DYSHTRRSIH…VVVAVLMKHL (262 aa)) form an IV repeat. Residues 1628-1648 (HYLDLFITFIICLNVITMSME) form a helical membrane-spanning segment. The Extracellular portion of the chain corresponds to 1649 to 1662 (HYNQPKSLDEALKY). The helical transmembrane segment at 1663–1684 (CNYVFTIVFVFEAALKLVAFGF) threads the bilayer. The Cytoplasmic segment spans residues 1685–1691 (RRFFKDR). Residues 1692 to 1710 (WNQLDLAIVLLSIMGIALE) form a helical membrane-spanning segment. The Extracellular portion of the chain corresponds to 1711 to 1724 (EIEMNAALPINPTI). The chain crosses the membrane as a helical span at residues 1725-1748 (IRIMRVLRIARVLKLLKMATGMRA). At 1749-1762 (LLDTVVQALPQVGN) the chain is on the cytoplasmic side. Residues 1763 to 1783 (LGLLFMLLFFIYAALGVELFG) form a helical membrane-spanning segment. Topologically, residues 1784–1846 (RLECSEDNPC…KHCLSYLPAL (63 aa)) are extracellular. A helical transmembrane segment spans residues 1847–1874 (SPVYFVTFVLVAQFVLVNVVVAVLMKHL). Topologically, residues 1875–2365 (EESNKEARED…APDDSGDEPV (491 aa)) are cytoplasmic. 2 stretches are compositionally biased toward polar residues: residues 1897 to 1916 (QGST…TEPD) and 1967 to 1983 (VTSA…SFQV). Disordered stretches follow at residues 1897-1920 (QGST…TPNL), 1967-1999 (VTSA…PLCA), 2053-2264 (APLG…GERW), and 2321-2365 (ELSM…DEPV). A compositionally biased stretch (acidic residues) spans 2092–2102 (DDAEAADPADE). A compositionally biased stretch (basic and acidic residues) spans 2172-2187 (GDGHLESGEVRARASE).

The protein belongs to the calcium channel alpha-1 subunit (TC 1.A.1.11) family. CACNA1H subfamily. In terms of assembly, interacts (via N-terminal cytoplasmic domain) with STAC. In terms of processing, in response to raising of intracellular calcium, the T-type channels are activated by CaM-kinase II. Is highly expressed in lumbosacral and thoracolumbar dorsal root ganglion neurons.

It localises to the cell membrane. The enzyme catalyses Ca(2+)(in) = Ca(2+)(out). Voltage-sensitive calcium channel that gives rise to T-type calcium currents. T-type calcium channels belong to the 'low-voltage activated (LVA)' group. A particularity of this type of channel is an opening at quite negative potentials, and a voltage-dependent inactivation. T-type channels serve pacemaking functions in both central neurons and cardiac nodal cells and support calcium signaling in secretory cells and vascular smooth muscle. They may also be involved in the modulation of firing patterns of neurons. In the adrenal zona glomerulosa, participates in the signaling pathway leading to aldosterone production in response to either AGT/angiotensin II, or hyperkalemia. This chain is Voltage-dependent T-type calcium channel subunit alpha-1H (Cacna1h), found in Mus musculus (Mouse).